The chain runs to 199 residues: Small ribosomal subunit protein eS1 (199 aa).

It belongs to the eukaryotic ribosomal protein eS1 family.

This chain is Small ribosomal subunit protein eS1, found in Pyrococcus horikoshii (strain ATCC 700860 / DSM 12428 / JCM 9974 / NBRC 100139 / OT-3).